Here is a 382-residue protein sequence, read N- to C-terminus: UBP1-associated proteins 1B (382 aa).

The tract at residues 1–99 (MAKEGEERKK…SDESEEIVDS (99 aa)) is disordered. Residues 10–22 (KEKKEKKERKERK) are compositionally biased toward basic residues. Residues 23–34 (RREAEELAVREK) are compositionally biased toward basic and acidic residues. The RRM domain maps to 163-248 (RNIFVRGLGW…RPFNSGKPRE (86 aa)).

It is found in the nucleus. Acts as a component of a complex regulating the turnover of mRNAs in the nucleus. Binds with high affinity to RNA molecules that contain U-rich sequences in 3'-UTRs. May function in complex with UBP1 and contribute to the stabilization of mRNAs in the nucleus. The protein is UBP1-associated proteins 1B (UBA1B) of Arabidopsis thaliana (Mouse-ear cress).